Consider the following 641-residue polypeptide: Phosphomethylpyrimidine synthase (641 aa).

Positions 1-13 are enriched in polar residues; it reads MNIRSNPDTTRPA. A disordered region spans residues 1 to 21; it reads MNIRSNPDTTRPAVTTGGLPS. Substrate is bound by residues N221, M250, Y279, H315, 335-337, 376-379, and E415; these read SRG and DGLR. H419 contributes to the Zn(2+) binding site. Y442 contacts substrate. H483 contributes to the Zn(2+) binding site. Residues C563, C566, and C571 each coordinate [4Fe-4S] cluster.

It belongs to the ThiC family. In terms of assembly, homodimer. Requires [4Fe-4S] cluster as cofactor.

It carries out the reaction 5-amino-1-(5-phospho-beta-D-ribosyl)imidazole + S-adenosyl-L-methionine = 4-amino-2-methyl-5-(phosphooxymethyl)pyrimidine + CO + 5'-deoxyadenosine + formate + L-methionine + 3 H(+). Its pathway is cofactor biosynthesis; thiamine diphosphate biosynthesis. Functionally, catalyzes the synthesis of the hydroxymethylpyrimidine phosphate (HMP-P) moiety of thiamine from aminoimidazole ribotide (AIR) in a radical S-adenosyl-L-methionine (SAM)-dependent reaction. The polypeptide is Phosphomethylpyrimidine synthase (Rhodopseudomonas palustris (strain BisB5)).